Here is a 74-residue protein sequence, read N- to C-terminus: Porwaprin-a (74 aa).

Positions 1-24 (MSSGGLLLLLGLLTLWEVLTPVSS) are cleaved as a signal peptide. Residues 27–71 (RPKKLGLCPPRPQKPCVKECKNDWSCPGQQKCCNYGCIDECRDPI) form the WAP domain. Cystine bridges form between C34–C59, C42–C63, C46–C58, and C52–C67.

This sequence belongs to the venom waprin family. In terms of tissue distribution, expressed by the venom gland.

It is found in the secreted. In terms of biological role, damages membranes of susceptible bacteria. Has no hemolytic activity. Not toxic to mice. Does not inhibit the proteinases elastase and cathepsin G. This Pseudechis porphyriacus (Red-bellied black snake) protein is Porwaprin-a.